Reading from the N-terminus, the 345-residue chain is MSDKLLYTLARPFLFAIDPEAAHNLTLPALRRAAAMGLTSSIVKPAHDPRTVMGITFPNPVGLAAGLDKDGAYIDGLATLGFGSIEVGTVTPRAQPGNPMPRMFRLPKANAIINRMGFNNGGADAFVANVRSSKFYQNKEGVLGLNIGKNADTPIERAVDDYLICLEKVYPYASYVTVNISSPNTKNLRQLQGASELDALLSQLKEAQQRLSDQHKRYVPIALKIAPDMELEQIQTIAQALLRHKMDGVIATNTTVSREAVKGLKYAEETGGLSGAPVFEASNTVIRALKSELGDALPIIGVGGILSGNDAQAKIAAGASLVQLYTGLIYRGPALVKECAAALHA.

Residues 65–69 and Thr-89 each bind FMN; that span reads AGLDK. Lys-69 contacts substrate. 114 to 118 lines the substrate pocket; sequence NRMGF. FMN contacts are provided by Asn-146 and Asn-179. Position 179 (Asn-179) interacts with substrate. Ser-182 serves as the catalytic Nucleophile. Asn-184 is a binding site for substrate. Lys-224 and Thr-252 together coordinate FMN. 253 to 254 is a substrate binding site; it reads NT. Residues Gly-275, Gly-304, and 325-326 each bind FMN; that span reads YT.

Belongs to the dihydroorotate dehydrogenase family. Type 2 subfamily. In terms of assembly, monomer. It depends on FMN as a cofactor.

Its subcellular location is the cell membrane. It catalyses the reaction (S)-dihydroorotate + a quinone = orotate + a quinol. The protein operates within pyrimidine metabolism; UMP biosynthesis via de novo pathway; orotate from (S)-dihydroorotate (quinone route): step 1/1. In terms of biological role, catalyzes the conversion of dihydroorotate to orotate with quinone as electron acceptor. The protein is Dihydroorotate dehydrogenase (quinone) of Janthinobacterium sp. (strain Marseille) (Minibacterium massiliensis).